We begin with the raw amino-acid sequence, 649 residues long: Sulfate transporter 1.1 (649 aa).

The segment at 1–20 is disordered; that stretch reads MSGTINPPDGGGSGARNPPV. The Cytoplasmic portion of the chain corresponds to 1 to 86; sequence MSGTINPPDG…AREYTLRKFR (86 aa). Residues 87 to 107 form a helical membrane-spanning segment; the sequence is GDLIAGLTIASLCIPQDIGYA. Residues 108–111 lie on the Extracellular side of the membrane; the sequence is KLAN. The helical transmembrane segment at 112–132 threads the bilayer; the sequence is VDPKYGLYSSFVPPLIYAGMG. Residues 133–136 lie on the Cytoplasmic side of the membrane; the sequence is SSRD. A helical membrane pass occupies residues 137-157; sequence IAIGPVAVVSLLVGTLCQAVI. The Extracellular portion of the chain corresponds to 158–168; the sequence is DPKKNPEDYLR. The next 2 membrane-spanning stretches (helical) occupy residues 169-189 and 190-210; these read LVFT…FLRL and GFLI…GAAI. Residues 211-248 lie on the Extracellular side of the membrane; that stretch reads TIALQQLKGFLGIKTFTKKTDIVSVMHSVFKNAEHGWN. A helical membrane pass occupies residues 249–269; the sequence is WQTIVIGASFLTFLLVTKFIG. Topologically, residues 270–275 are cytoplasmic; it reads KRNRKL. A helical membrane pass occupies residues 276–296; sequence FWVPAIAPLISVIISTFFVFI. At 297 to 334 the chain is on the extracellular side; the sequence is FRADKQGVQIVKHIDQGINPISVHKIFFSGKYFTEGIR. A helical membrane pass occupies residues 335-355; it reads IGGIAGMVALTEAVAIARTFA. Residues 356-367 are Cytoplasmic-facing; it reads AMKDYQIDGNKE. Residues 368 to 388 traverse the membrane as a helical segment; the sequence is MIALGTMNVVGSMTSCYIATG. The Extracellular segment spans residues 389–404; sequence SFSRSAVNFMAGVETA. Residues 405–425 traverse the membrane as a helical segment; it reads VSNIVMAIVVALTLEFITPLF. At 426–431 the chain is on the cytoplasmic side; it reads KYTPNA. Residues 432–452 form a helical membrane-spanning segment; sequence ILAAIIISAVLGLIDIDAAIL. The Extracellular portion of the chain corresponds to 453-465; it reads IWRIDKLDFLACM. A helical membrane pass occupies residues 466 to 486; that stretch reads GAFLGVIFISVEIGLLIAVVI. Topologically, residues 487–649 are cytoplasmic; it reads SFAKILLQVT…CSTEVAEQQT (163 aa). Positions 517-640 constitute an STAS domain; that stretch reads QYPDAAQIPG…LTVGDAVAVC (124 aa).

Belongs to the SLC26A/SulP transporter (TC 2.A.53) family. As to quaternary structure, interacts with OASA1 through its STAS domain. Expressed in lateral root cap, root hairs, epidermal and cortical cells of roots.

The protein localises to the membrane. In terms of biological role, high-affinity H(+)/sulfate cotransporter that mediates the uptake of the environmental sulfate by plant roots under low-sulfur conditions. Plays a central role in the regulation of sulfate assimilation. The sequence is that of Sulfate transporter 1.1 (SULTR1;1) from Arabidopsis thaliana (Mouse-ear cress).